The following is a 92-amino-acid chain: Small ribosomal subunit protein bS20 (92 aa).

Positions 1-23 (MANTPSAKKRAKQAEKRRSHNAS) are disordered. Over residues 7–20 (AKKRAKQAEKRRSH) the composition is skewed to basic residues.

It belongs to the bacterial ribosomal protein bS20 family.

Functionally, binds directly to 16S ribosomal RNA. This Pseudomonas entomophila (strain L48) protein is Small ribosomal subunit protein bS20.